A 1176-amino-acid chain; its full sequence is DNA-directed RNA polymerase subunit beta (1176 aa).

The segment covering 13–30 (TDASLHQGRPQSSSNSSV) has biased composition (polar residues). The tract at residues 13-35 (TDASLHQGRPQSSSNSSVPGAPN) is disordered.

Belongs to the RNA polymerase beta chain family. The RNAP catalytic core consists of 2 alpha, 1 beta, 1 beta' and 1 omega subunit. When a sigma factor is associated with the core the holoenzyme is formed, which can initiate transcription.

The enzyme catalyses RNA(n) + a ribonucleoside 5'-triphosphate = RNA(n+1) + diphosphate. In terms of biological role, DNA-dependent RNA polymerase catalyzes the transcription of DNA into RNA using the four ribonucleoside triphosphates as substrates. The chain is DNA-directed RNA polymerase subunit beta from Mycobacterium ulcerans (strain Agy99).